We begin with the raw amino-acid sequence, 339 residues long: Serine/arginine-rich splicing factor 6 (339 aa).

The region spanning 2–72 is the RRM 1 domain; the sequence is PRVYIGRLSY…ERVIVEHARG (71 aa). S45, S81, and S84 each carry phosphoserine. The tract at residues 75–103 is disordered; sequence RDRDGYSYGSRSGGGGYSSRRTSGRDKYG. The region spanning 110–183 is the RRM 2 domain; sequence YRLIVENLSS…RNIRLIEDKP (74 aa). K165 carries the N6-acetyllysine modification. A disordered region spans residues 176–339; it reads IRLIEDKPRT…RSRSRSSSRD (164 aa). K182 participates in a covalent cross-link: Glycyl lysine isopeptide (Lys-Gly) (interchain with G-Cter in SUMO2). The span at 185–250 shows a compositional bias: basic residues; that stretch reads TSHRRSYSGS…RKSRSKSKSK (66 aa). The segment covering 280-291 has biased composition (basic and acidic residues); it reads SPKENGKGDIKS. Phosphoserine is present on residues S297 and S299. S303 bears the Phosphoserine; by DYRK1A mark. A phosphoserine mark is found at S314 and S316. Positions 321–339 are enriched in basic residues; sequence RASRSRSRSRSRSRSSSRD.

It belongs to the splicing factor SR family. As to quaternary structure, binds SREK1/SFRS12. Interacts with DYRK1A. Interacts with RBMY; the interaction inhibits SRSF6 pre-mRNA splicing. In terms of processing, extensively phosphorylated on serine residues in the RS domain. Phosphorylated by DYRK1A, probably in the RS domain. Phosphorylation by DYRK1A modulates alternative splice site selection and inhibits the expression of MAPT/Tau exon 10.

Its subcellular location is the nucleus. It is found in the nucleus speckle. In terms of biological role, plays a role in constitutive splicing and modulates the selection of alternative splice sites. Plays a role in the alternative splicing of MAPT/Tau exon 10. Binds to alternative exons of TNC pre-mRNA and promotes the expression of alternatively spliced TNC. Plays a role in wound healing and in the regulation of keratinocyte differentiation and proliferation via its role in alternative splicing. The sequence is that of Serine/arginine-rich splicing factor 6 (Srsf6) from Mus musculus (Mouse).